The sequence spans 193 residues: MSIFISPSNNTGWGLRAPSKMYGGAXQRSTQHPVRVRGHFRAPWGALKGRVRSRTTVDDVIDQVVADARNYTPAAAPVSTVDAVIDSVVSDARRYARAKSRRRRIARRHRSTTAMRAARALLRRARRTGRRAMLRAARRAASGASAGRTRRRAATAAATAISSMSRPRRGNVYWVRDXATGVRVPVRTRPPRT.

S2 carries the post-translational modification N-acetylserine; by host. A propeptide spanning residues 2-24 is cleaved from the precursor; it reads SIFISPSNNTGWGLRAPSKMYGG. An N6-acetyllysine; by host modification is found at K48. T55 bears the Phosphothreonine; by host mark. A Nuclear localization signal motif is present at residues 183–193; sequence RVPVRTRPPRT.

The protein belongs to the adenoviridae histone-like nucleoprotein family. Interacts with the core-capsid bridging protein; this interaction bridges the virus core to the capsid. Interacts with host NPM1; this interaction might play a role in placing the pre-histone-like nucleoprotein on the viral DNA or regulating viral gene expression. Interacts with host HMGB1; this interaction inhibits host immune response. Post-translationally, cleaved near the N-terminus by the viral protease during virion maturation to form the mature protein.

Its subcellular location is the virion. It is found in the host nucleus. The protein localises to the host nucleolus. Plays a role in the inhibition of host immune response within the nucleus. Interacts with cellular nucleosomes and immobilizes the host immune danger signal HMGB1 on chromatin. In turn, prevents HMGB1 release out of the cell and thus decreases inflammation. Also plays a role in the wrapping and condensation of the viral DNA. May also promote viral genome import into the nucleus. This Homo sapiens (Human) protein is Pre-histone-like nucleoprotein.